Reading from the N-terminus, the 363-residue chain is L-serine dehydratase/L-threonine deaminase (363 aa).

A2 carries the N-acetylalanine modification. An N6-(pyridoxal phosphate)lysine modification is found at K41. The segment at 74–98 (RGRSHSGDEQPHVRSQALLPDTPSP) is disordered. Residue P164 participates in pyridoxal 5'-phosphate binding.

This sequence belongs to the serine/threonine dehydratase family. As to quaternary structure, homodimer. Pyridoxal 5'-phosphate serves as cofactor. As to expression, predominantly expressed in the periportal regions of the liver.

Its subcellular location is the cytoplasm. It carries out the reaction L-serine = pyruvate + NH4(+). The enzyme catalyses L-threonine = 2-oxobutanoate + NH4(+). It functions in the pathway carbohydrate biosynthesis; gluconeogenesis. In terms of biological role, catalyzes the pyridoxal-phosphate-dependent dehydrative deamination of L-threonine and L-serine to ammonia and alpha-ketobutyrate and pyruvate, respectively. The protein is L-serine dehydratase/L-threonine deaminase (Sds) of Rattus norvegicus (Rat).